The sequence spans 169 residues: Peptide methionine sulfoxide reductase MsrA (169 aa).

C10 is an active-site residue.

Belongs to the MsrA Met sulfoxide reductase family.

It carries out the reaction L-methionyl-[protein] + [thioredoxin]-disulfide + H2O = L-methionyl-(S)-S-oxide-[protein] + [thioredoxin]-dithiol. The catalysed reaction is [thioredoxin]-disulfide + L-methionine + H2O = L-methionine (S)-S-oxide + [thioredoxin]-dithiol. Functionally, has an important function as a repair enzyme for proteins that have been inactivated by oxidation. Catalyzes the reversible oxidation-reduction of methionine sulfoxide in proteins to methionine. The protein is Peptide methionine sulfoxide reductase MsrA of Streptococcus mutans serotype c (strain ATCC 700610 / UA159).